A 140-amino-acid chain; its full sequence is Ribosome maturation factor RimP (140 aa).

Belongs to the RimP family.

It localises to the cytoplasm. Its function is as follows. Required for maturation of 30S ribosomal subunits. The sequence is that of Ribosome maturation factor RimP from Campylobacter jejuni subsp. jejuni serotype O:23/36 (strain 81-176).